The following is a 255-amino-acid chain: Segregation and condensation protein A (255 aa).

The protein belongs to the ScpA family. Component of a cohesin-like complex composed of ScpA, ScpB and the Smc homodimer, in which ScpA and ScpB bind to the head domain of Smc. The presence of the three proteins is required for the association of the complex with DNA.

The protein resides in the cytoplasm. Functionally, participates in chromosomal partition during cell division. May act via the formation of a condensin-like complex containing Smc and ScpB that pull DNA away from mid-cell into both cell halves. This chain is Segregation and condensation protein A, found in Lactiplantibacillus plantarum (strain ATCC BAA-793 / NCIMB 8826 / WCFS1) (Lactobacillus plantarum).